Reading from the N-terminus, the 236-residue chain is Pyridoxine 5'-phosphate synthase (236 aa).

Residue N6 coordinates 3-amino-2-oxopropyl phosphate. 8 to 9 (DH) contacts 1-deoxy-D-xylulose 5-phosphate. R17 contributes to the 3-amino-2-oxopropyl phosphate binding site. The Proton acceptor role is filled by H42. R44 and H49 together coordinate 1-deoxy-D-xylulose 5-phosphate. Catalysis depends on E69, which acts as the Proton acceptor. T99 is a 1-deoxy-D-xylulose 5-phosphate binding site. The active-site Proton donor is H190. Residues G191 and 212 to 213 (GH) each bind 3-amino-2-oxopropyl phosphate.

This sequence belongs to the PNP synthase family. As to quaternary structure, homooctamer; tetramer of dimers.

It is found in the cytoplasm. The catalysed reaction is 3-amino-2-oxopropyl phosphate + 1-deoxy-D-xylulose 5-phosphate = pyridoxine 5'-phosphate + phosphate + 2 H2O + H(+). It functions in the pathway cofactor biosynthesis; pyridoxine 5'-phosphate biosynthesis; pyridoxine 5'-phosphate from D-erythrose 4-phosphate: step 5/5. Functionally, catalyzes the complicated ring closure reaction between the two acyclic compounds 1-deoxy-D-xylulose-5-phosphate (DXP) and 3-amino-2-oxopropyl phosphate (1-amino-acetone-3-phosphate or AAP) to form pyridoxine 5'-phosphate (PNP) and inorganic phosphate. This chain is Pyridoxine 5'-phosphate synthase, found in Chloroherpeton thalassium (strain ATCC 35110 / GB-78).